Consider the following 372-residue polypeptide: Peroxisomal biogenesis factor 3 (372 aa).

Topologically, residues 1-15 are cytoplasmic; the sequence is MLRSMWNFLKRHKKK. The segment at 1–45 is targeting to peroxisomes; it reads MLRSMWNFLKRHKKKCIFLGTVLGGVYILGKYGQKKIREIQEREA. Residues 16–36 traverse the membrane as a helical segment; sequence CIFLGTVLGGVYILGKYGQKK. Over 37-116 the chain is Peroxisomal; that stretch reads IREIQEREAA…LKIISFTRSI (80 aa). Residues 117-140 traverse the membrane as a helical segment; it reads VAVYSTCMLVVLLRVQLNIIGGYI. The interval 120–136 is interaction with PEX19; the sequence is YSTCMLVVLLRVQLNII. Over 141 to 372 the chain is Cytoplasmic; that stretch reads YLDNATVGKN…AFSTPQQLEK (232 aa).

The protein belongs to the peroxin-3 family. As to quaternary structure, interacts with PEX19. In terms of tissue distribution, identified in all tissues analyzed, with the strongest expression in liver and in testis.

The protein resides in the peroxisome membrane. Involved in peroxisome biosynthesis and integrity. Assembles membrane vesicles before the matrix proteins are translocated. As a docking factor for PEX19, is necessary for the import of peroxisomal membrane proteins in the peroxisomes. The protein is Peroxisomal biogenesis factor 3 (Pex3) of Mus musculus (Mouse).